Reading from the N-terminus, the 86-residue chain is Elicitor peptide 5 (86 aa).

Residues 1–59 (MQQERDHKRDCCKLMPQTVKAFFKCLRFRRSSSSSSDMVKARARNEEKEEPSSIETSTR) constitute a propeptide that is removed on maturation. The tract at residues 31-86 (SSSSSSDMVKARARNEEKEEPSSIETSTRSLNVMRKGIRKQPVSSGKRGGVNDYDM) is disordered. Over residues 39-51 (VKARARNEEKEEP) the composition is skewed to basic and acidic residues.

Belongs to the brassicaceae elicitor peptide family.

Elicitor of plant defense. The sequence is that of Elicitor peptide 5 (PEP5) from Arabidopsis thaliana (Mouse-ear cress).